Here is an 83-residue protein sequence, read N- to C-terminus: MNNMSLEMLEKLEAKVQMAVDTISLLQMEIEELKETNESLTAEANELRSNRETLAQDNDKLQNDHQAWQERVRTLLGKMDHVE.

A coiled-coil region spans residues 7 to 80; it reads EMLEKLEAKV…RVRTLLGKMD (74 aa).

The protein belongs to the ZapB family. Homodimer. The ends of the coiled-coil dimer bind to each other, forming polymers. Interacts with FtsZ.

Its subcellular location is the cytoplasm. Its function is as follows. Non-essential, abundant cell division factor that is required for proper Z-ring formation. It is recruited early to the divisome by direct interaction with FtsZ, stimulating Z-ring assembly and thereby promoting cell division earlier in the cell cycle. Its recruitment to the Z-ring requires functional FtsA or ZipA. This chain is Cell division protein ZapB, found in Photobacterium profundum (strain SS9).